The following is a 267-amino-acid chain: Luciferase (267 aa).

Residue Asn4 is glycosylated (N-linked (GlcNAc...) asparagine). The helical transmembrane segment at 17–39 (LSSRSIAITCGVVLASAIAFPII) threads the bilayer.

It belongs to the fungal luciferase family.

The protein resides in the membrane. The catalysed reaction is 3-hydroxyhispidin + O2 = (E)-caffeoylpyruvate + hnu + CO2. It carries out the reaction 3-hydroxyhispidin + O2 = 4-[(E)-2-(3,4-dihydroxyphenyl)ethenyl]-1,7-dihydroxy-2,3,5-trioxabicyclo[2.2.2]oct-7-en-6-one. Luciferase; part of the gene cluster that mediates the fungal bioluminescence cycle. Uses the fungal luciferin 3-hydroxyhispidin as a substrate to produce an endoperoxide as a high-energy intermediate with decomposition that yields oxyluciferin (also known as caffeoylpyruvate) and light emission. The fungal bioluminescence cycle begins with the hispidin synthetase that catalyzes the formation of hispidin which is further hydroxylated by the hispidin-3-hydroxylase, yielding the fungal luciferin 3-hydroxyhispidin. The luciferase then produces an endoperoxide as a high-energy intermediate with decomposition that yields oxyluciferin and light emission. Oxyluciferin can be recycled to caffeic acid by caffeoylpyruvate hydrolase. The protein is Luciferase of Neonothopanus nambi (Agaricus nambi).